Here is a 1603-residue protein sequence, read N- to C-terminus: MKSIIIASLVALAIAASPALDRTFSPKSEYVYKFDGLLLSGLPTTFSDASQTLISCRTRLQAVDDRYIHLQLIDIQYSASHIPQSEQWPKIKSLEQRELSDELKELLELPFRAQIRNGLVSEIQFSSEDAEWSKNAKRSILNLFSLRKSAPVDEMSQDQKDMESDKDSLFFNVHEKTMEGDCEVAYTIVQEGEKTIYTKSVNFDKCITRPETAYGLRFGSECKECEKEGQFVKPQTVYTYTFKNEKLQESEVHSIYTLNVNGQEVVKSETRSKVTFVEESKINREIKKVSGPKEEIVYSMENEKLIEQFYQQGDQAEVNPFKAIEMEQKVEQLDEIFRQIQEHEQNTPETVHLIARAVRMFRMCTIEELKKVHTTIYTKAEKKVQLVIETTLAVAGTKNTIQHLIHHFEKKSITPLRAAELLKSVQETLYPSEHIADLLIQLAQSPLSEKYEPLRQSAWLAAGSVVRGFASKTQDLPLIRPASRQTKEKYVRVFMQHFRNADSTYEKVLALKTLGNAGIDLSVYELVQLIQDPRQPLSIRTEAVDALRLLKDVMPRKIQKVLLPVYKNRQNKPELRMAALWRMMHTIPEEPVLAHIVSQMENESNQHVAAFTYNVLRQFSKSTNPCYQQLAVRCSKVLLFTRYQPQEQMLSTYSQLPLFNSEWLSGVQFDFATIFEKNAFLPKEVQASFETVFGGNWNKYFAQVGFSQQNFEQVILKTLEKLSLYGKQSDELRSRRVQSGIQMLQEIVKKMNIRPRVQQTDSQNAHAVFYLRYKEMDYIVLPIDMETIDNVVEKYVRNGEFDIKSLLTFLTNDSKFELHRALFFYEAERRIPTTIGMPLTISGKMPTILSINGKVSIELEKLGARLVLDIVPTVATTHVTEMRFWYPVIEQGVKSLQSARLHTPLRFESTVELKKNTLEITHKFVVPENKKTTVSVHTRPVAFIRVPKNQDSEYVETEEKTISHSQYQMSTEEIDRQYETFGLRINAQGNVLSQWTLPMVLMTEQDFEFTLENKNRPVEFTARVTIGNLEKTDLSEIKFDKIFEKEFDLENNESENRRQYFHKMIREIQSEQGFKNLITLKLEAPQQMYWNTELRTVCDKWIRMCKVEMDARRSPMEHENKEWTLRTELLAARPQMPSSLRQLREQPHREVQLALNAKWGSSKKSEITFNAQLEQSTEQKKFLRNIEREYKGIPEYELLIKAARLNQVNVVSEYKLTPESEYTFSRIFDLIKAYNFWTVSEKRVQNEDRRVVLQLSVEPLSRQYMNMTIQTPEQEVELKNVRIPRVVLPTIARRAMFQQTWEKTGATCKVGQSEVSTFDNVIYRAPLTTCYSLVAKDCSEQPRFAVLAKKINKNSEELLVKVVRREEEIVVKKSDDKFLVKVDEKKVNPTELEQYNIEILGDNLIVIRLPHGEVRFDGYTVKTNMPSVASQNQLCGLCGNNDGERDNEFMTADNYETEDVEEFHRSYLLKNEECEVENDRISEKKNYRNKWNREEKKSDYVSSSDYENNYDEKETENQLFKKTLIKEFSNRVCFSIEPVSECRRGLESEKTSNEKIRFTCMPRHSKNARRFLKEAREQTVADLVDFPVSFVESVKIPTACVAY.

The N-terminal stretch at 1–15 (MKSIIIASLVALAIA) is a signal peptide. The Vitellogenin domain maps to 24–685 (FSPKSEYVYK…EKNAFLPKEV (662 aa)). Residue N1266 is glycosylated (N-linked (GlcNAc...) asparagine). The VWFD domain occupies 1306 to 1475 (ATCKVGQSEV…SYLLKNEECE (170 aa)). 2 disulfides stabilise this stretch: C1308/C1438 and C1330/C1474.

In terms of tissue distribution, expressed in the intestine of adult hermaphrodites.

The protein localises to the secreted. Its function is as follows. Precursor of the egg-yolk proteins that are sources of nutrients during embryonic development. Together with other vitellogenins, may play a role in modulating life-span, acting via induction of autophagy and lysosomal lipolysis. The sequence is that of Vitellogenin-3 (vit-3) from Caenorhabditis elegans.